A 488-amino-acid polypeptide reads, in one-letter code: Prostaglandin E2 receptor EP4 subtype (488 aa).

Topologically, residues 1-19 (MSTPVANASASSMPELLNN) are extracellular. Asn7 carries N-linked (GlcNAc...) asparagine glycosylation. The helical transmembrane segment at 20 to 43 (PVTIPAVMFIFGVVGNLVAIVVLC) threads the bilayer. The Cytoplasmic segment spans residues 44–55 (KSRKEQKETTFY). A helical transmembrane segment spans residues 56–79 (TLVCGLAVTDLLGTLLVSPVTIAT). Residues 80-96 (YMKGQWPGGQALCDYST) are Extracellular-facing. A disulfide bridge links Cys92 with Cys170. A helical membrane pass occupies residues 97–115 (FILLFFGLSGLSIICAMSI). Residues 116-135 (ERYLAINHAYFYSHYVDKRL) lie on the Cytoplasmic side of the membrane. The chain crosses the membrane as a helical span at residues 136–160 (AGLTLFAVYASNVLFCALPNMGLGR). At 161–184 (SRLQFPDTWCFIDWRTNVTAHAAF) the chain is on the extracellular side. Residue Asn177 is glycosylated (N-linked (GlcNAc...) asparagine). A helical membrane pass occupies residues 185 to 211 (SYMYAGFSSFLILATVLCNVLVCGALL). The Cytoplasmic portion of the chain corresponds to 212–270 (RMHRQFMRRTSLGTEQHHAAAAAAVTSAACRGHPTASPALPRLSDFRRRRSFRRIAGAE). A helical membrane pass occupies residues 271 to 298 (IQMVILLIATSLVVLICSIPLVVRVFIN). The Extracellular portion of the chain corresponds to 299–315 (QLYQPDLVREISQNPDL). Residues 316–335 (QAIRIASVNPILDPWIYILL) form a helical membrane-spanning segment. Topologically, residues 336–488 (RKTVLSKAIE…ETLNLSEKCI (153 aa)) are cytoplasmic. Residues 358–371 (RRDRSGQHCSDSRR) show a composition bias toward basic and acidic residues. Residues 358-381 (RRDRSGQHCSDSRRTSSAMSTHSR) are disordered. Positions 372–381 (TSSAMSTHSR) are enriched in polar residues. Phosphoserine occurs at positions 377, 380, 382, and 385. Positions 456-475 (EVGGGGRAGPTPKGSSLQVT) are disordered.

It belongs to the G-protein coupled receptor 1 family. Interacts with FEM1A. Post-translationally, phosphorylation mediates agonist-mediated desensitization by promoting cytoplasmic retention. In terms of tissue distribution, highly expressed in intestine, duodenal epithelium, uterus, thymus and adrenal cortex. Lower but significant expression in whole adrenal, lung, spleen, stomach, and kidney. In this latter organ, the receptor is localized in the glomeruli and the transitional epithelium of the renal calyx.

It localises to the cell membrane. Its function is as follows. Receptor for prostaglandin E2 (PGE2). The activity of this receptor is mediated by G(s) proteins that stimulate adenylate cyclase. Has a relaxing effect on smooth muscle. May play an important role in regulating renal hemodynamics, intestinal epithelial transport, adrenal aldosterone secretion, and uterine function. This chain is Prostaglandin E2 receptor EP4 subtype (PTGER4), found in Oryctolagus cuniculus (Rabbit).